The sequence spans 365 residues: Oligosaccharides import ATP-binding protein MsmX (365 aa).

An ABC transporter domain is found at 4 to 235 (LRMEHIYKFY…PENVFVGGFI (232 aa)). An ATP-binding site is contributed by 37 to 44 (GPSGCGKS).

Belongs to the ABC transporter superfamily. The complex involved in maltodextrin import is composed of two ATP-binding proteins (MsmX), two transmembrane proteins (MdxF and MdxG) and a solute-binding protein (MdxE). The complex involved in arabinooligosaccharides uptake is composed of two ATP-binding proteins (MsmX), two transmembrane proteins (AraP and AraQ) and a solute-binding protein (AraN). The complex involved in galactooligosaccharides uptake is composed of two ATP-binding proteins (MsmX), two transmembrane proteins (GanP and GanQ) and a solute-binding protein (GanS). The complex involved in melibiose, raffinose and stachyose import is composed of two ATP-binding proteins (MsmX), two transmembrane proteins (MelC and MelD) and a solute-binding protein (MelE). The complex involved in polygalacturonan and rhamnogalacturonan type I uptake is probably composed of two ATP-binding proteins (MsmX), two transmembrane proteins (YtcP and YteP) and a solute-binding protein (YtcQ).

Its subcellular location is the cell membrane. Required to energize different ABC-type saccharide transporters. Part of the MdxEFG-MsmX ABC transporter complex involved in maltodextrin import, of the AraNPQ-MsmX complex involved in arabinooligosaccharides import, of the GanPQS-MsmX complex involved in galactooligosaccharides import, and of the MelEDC-MsmX complex involved in melibiose, raffinose and stachyose import. Is probably also part of the ABC transporter complex YtcQP-YteP-MsmX involved in polygalacturonan and rhamnogalacturonan type I import during pectin degradation. Responsible for energy coupling to the transport system. The polypeptide is Oligosaccharides import ATP-binding protein MsmX (msmX) (Bacillus subtilis (strain 168)).